The following is a 249-amino-acid chain: uncharacterized protein (249 aa).

Belongs to the AIM2 family.

Its subcellular location is the cytoplasm. The protein localises to the nucleus. This is an uncharacterized protein from Schizosaccharomyces pombe (strain 972 / ATCC 24843) (Fission yeast).